Here is a 370-residue protein sequence, read N- to C-terminus: Ubiquitin carboxyl-terminal hydrolase 12-B (370 aa).

Positions 39–369 constitute a USP domain; that stretch reads FGLVNFGNTC…SGYILFYQSR (331 aa). The Nucleophile role is filled by Cys48. The interval 145-168 is disordered; that stretch reads KQEKQNGRIPNGNIDNENNNNTPD. Residues 155-165 are compositionally biased toward low complexity; it reads NGNIDNENNNN. Zn(2+)-binding residues include Cys186, Cys189, Cys233, and Cys236. Residue His317 is the Proton acceptor of the active site.

This sequence belongs to the peptidase C19 family. USP12/USP46 subfamily. Interacts with WDR48.

The enzyme catalyses Thiol-dependent hydrolysis of ester, thioester, amide, peptide and isopeptide bonds formed by the C-terminal Gly of ubiquitin (a 76-residue protein attached to proteins as an intracellular targeting signal).. Its function is as follows. Deubiquitinating enzyme. Has almost no deubiquitinating activity by itself and requires the interaction with wdr48 to have a high activity. This is Ubiquitin carboxyl-terminal hydrolase 12-B (usp12-b) from Xenopus laevis (African clawed frog).